A 1062-amino-acid chain; its full sequence is Carbamoyl phosphate synthase large chain (1062 aa).

The carboxyphosphate synthetic domain stretch occupies residues 1–401 (MPKRTDIHKI…AMQKAVQSLE (401 aa)). ATP-binding residues include Arg129, Arg169, Gly175, Gly176, Lys208, Ile210, Glu215, Gly241, Ile242, His243, Gln284, and Glu298. Residues 133-327 (KELCQKLGEP…IAKMAAKIAI (195 aa)) enclose the ATP-grasp 1 domain. Residues Gln284, Glu298, and Asn300 each coordinate Mg(2+). The Mn(2+) site is built by Gln284, Glu298, and Asn300. The segment at 402 to 546 (IDEKDLYSAK…YSTYDGENES (145 aa)) is oligomerization domain. The segment at 547–929 (RKSGKKSVIV…ALYKAFAGAK (383 aa)) is carbamoyl phosphate synthetic domain. The region spanning 671 to 861 (DQIIKSLHLH…MAQVATRVIM (191 aa)) is the ATP-grasp 2 domain. 10 residues coordinate ATP: Arg707, Asp746, Leu748, Glu752, Gly777, Val778, His779, Ser780, Gln820, and Glu832. The Mg(2+) site is built by Gln820, Glu832, and Asn834. Residues Gln820, Glu832, and Asn834 each coordinate Mn(2+). An MGS-like domain is found at 930 to 1062 (MQLPENGNVL…NRSFATDALK (133 aa)). The interval 930 to 1062 (MQLPENGNVL…NRSFATDALK (133 aa)) is allosteric domain.

This sequence belongs to the CarB family. Composed of two chains; the small (or glutamine) chain promotes the hydrolysis of glutamine to ammonia, which is used by the large (or ammonia) chain to synthesize carbamoyl phosphate. Tetramer of heterodimers (alpha,beta)4. It depends on Mg(2+) as a cofactor. Mn(2+) is required as a cofactor.

The catalysed reaction is hydrogencarbonate + L-glutamine + 2 ATP + H2O = carbamoyl phosphate + L-glutamate + 2 ADP + phosphate + 2 H(+). The enzyme catalyses hydrogencarbonate + NH4(+) + 2 ATP = carbamoyl phosphate + 2 ADP + phosphate + 2 H(+). It functions in the pathway amino-acid biosynthesis; L-arginine biosynthesis; carbamoyl phosphate from bicarbonate: step 1/1. Its pathway is pyrimidine metabolism; UMP biosynthesis via de novo pathway; (S)-dihydroorotate from bicarbonate: step 1/3. Large subunit of the glutamine-dependent carbamoyl phosphate synthetase (CPSase). CPSase catalyzes the formation of carbamoyl phosphate from the ammonia moiety of glutamine, carbonate, and phosphate donated by ATP, constituting the first step of 2 biosynthetic pathways, one leading to arginine and/or urea and the other to pyrimidine nucleotides. The large subunit (synthetase) binds the substrates ammonia (free or transferred from glutamine from the small subunit), hydrogencarbonate and ATP and carries out an ATP-coupled ligase reaction, activating hydrogencarbonate by forming carboxy phosphate which reacts with ammonia to form carbamoyl phosphate. The polypeptide is Carbamoyl phosphate synthase large chain (Lactobacillus delbrueckii subsp. bulgaricus (strain ATCC BAA-365 / Lb-18)).